A 215-amino-acid chain; its full sequence is Cytochrome b6 (215 aa).

Residues 32–52 (IFYCLGGITLTCFIIQVATGF) form a helical membrane-spanning segment. Position 35 (Cys-35) interacts with heme c. Heme b contacts are provided by His-86 and His-100. A run of 3 helical transmembrane segments spans residues 90–110 (ASMM…TGGF), 116–136 (LTWV…VTGY), and 186–206 (LHTF…FLMI). Heme b contacts are provided by His-187 and His-202.

The protein belongs to the cytochrome b family. PetB subfamily. In terms of assembly, the 4 large subunits of the cytochrome b6-f complex are cytochrome b6, subunit IV (17 kDa polypeptide, PetD), cytochrome f and the Rieske protein, while the 4 small subunits are PetG, PetL, PetM and PetN. The complex functions as a dimer. It depends on heme b as a cofactor. Heme c is required as a cofactor.

It is found in the plastid. The protein localises to the chloroplast thylakoid membrane. In terms of biological role, component of the cytochrome b6-f complex, which mediates electron transfer between photosystem II (PSII) and photosystem I (PSI), cyclic electron flow around PSI, and state transitions. In Zygnema circumcarinatum (Green alga), this protein is Cytochrome b6.